The primary structure comprises 159 residues: Ribosomal RNA large subunit methyltransferase H (159 aa).

S-adenosyl-L-methionine contacts are provided by residues Leu76, Gly108, and 127–132; that span reads FGRMTL.

This sequence belongs to the RNA methyltransferase RlmH family. In terms of assembly, homodimer.

It is found in the cytoplasm. It catalyses the reaction pseudouridine(1915) in 23S rRNA + S-adenosyl-L-methionine = N(3)-methylpseudouridine(1915) in 23S rRNA + S-adenosyl-L-homocysteine + H(+). Specifically methylates the pseudouridine at position 1915 (m3Psi1915) in 23S rRNA. The protein is Ribosomal RNA large subunit methyltransferase H of Lactococcus lactis subsp. cremoris (strain SK11).